Consider the following 431-residue polypeptide: Histidinol dehydrogenase (431 aa).

The NAD(+) site is built by Y124, Q187, and N210. Substrate contacts are provided by S236, Q258, and H261. Zn(2+)-binding residues include Q258 and H261. Catalysis depends on proton acceptor residues E325 and H326. The substrate site is built by H326, D359, E413, and H418. Position 359 (D359) interacts with Zn(2+). H418 serves as a coordination point for Zn(2+).

This sequence belongs to the histidinol dehydrogenase family. Zn(2+) serves as cofactor.

The enzyme catalyses L-histidinol + 2 NAD(+) + H2O = L-histidine + 2 NADH + 3 H(+). Its pathway is amino-acid biosynthesis; L-histidine biosynthesis; L-histidine from 5-phospho-alpha-D-ribose 1-diphosphate: step 9/9. Functionally, catalyzes the sequential NAD-dependent oxidations of L-histidinol to L-histidinaldehyde and then to L-histidine. The chain is Histidinol dehydrogenase from Legionella pneumophila (strain Lens).